The primary structure comprises 839 residues: Phosphatidylinositol-glycan-specific phospholipase D (839 aa).

Residues 1 to 23 form the signal peptide; sequence MSAFRFWSGLLMLLGFLCPRSSP. N-linked (GlcNAc...) asparagine glycosylation is found at asparagine 94, asparagine 271, asparagine 292, asparagine 307, and asparagine 321. FG-GAP repeat units follow at residues 365–427, 434–496, 498–558, 562–622, 632–692, 703–769, and 787–839; these read SSPA…GLPR, KEAH…GQLS, SPNV…YSSR, NVEA…SPGR, QSWF…GSTR, SLLS…TVGD, and QYVL…LGQD. N-linked (GlcNAc...) asparagine glycans are attached at residues asparagine 500, asparagine 590, and asparagine 658.

Belongs to the GPLD1 family. In terms of assembly, monomer. Glycosylated.

It is found in the secreted. It catalyses the reaction a 6-(alpha-D-glucosaminyl)-1-(1,2-diacyl-sn-glycero-3-phospho)-1D-myo-inositol + H2O = 6-(alpha-D-glucosaminyl)-1D-myo-inositol + a 1,2-diacyl-sn-glycero-3-phosphate + H(+). Functionally, this protein hydrolyzes the inositol phosphate linkage in proteins anchored by phosphatidylinositol glycans (GPI-anchor) thus releasing these proteins from the membrane. The polypeptide is Phosphatidylinositol-glycan-specific phospholipase D (GPLD1) (Bos taurus (Bovine)).